A 244-amino-acid polypeptide reads, in one-letter code: Probable phosphatase NT01CX_1282 (244 aa).

Positions 8, 10, 16, 41, 74, 102, 132, 193, and 195 each coordinate Zn(2+).

This sequence belongs to the PHP family. It depends on Zn(2+) as a cofactor.

In Clostridium novyi (strain NT), this protein is Probable phosphatase NT01CX_1282.